A 193-amino-acid chain; its full sequence is MPEEGSGCSVRRRPYGCVLRAALVPLVAGLVICLVVCIQRFAQAQQQLPLESLGWDVAELQLNHTGPQQDPRLYWQGGPALGRSFLHGPELDKGQLRIHRDGIYMVHIQVTLAICSSTTASRHHPTTLAVGICSPASRSISLLRLSFHQGCTIASQRLTPLARGDTLCTNLTGTLLPSRNTDETFFGVQWVRP.

Topologically, residues 1-17 (MPEEGSGCSVRRRPYGC) are cytoplasmic. A helical; Signal-anchor for type II membrane protein transmembrane segment spans residues 18–38 (VLRAALVPLVAGLVICLVVCI). Over 39–193 (QRFAQAQQQL…TFFGVQWVRP (155 aa)) the chain is Extracellular. The THD domain occupies 56-191 (DVAELQLNHT…DETFFGVQWV (136 aa)). The N-linked (GlcNAc...) asparagine glycan is linked to asparagine 63. Disulfide bonds link cysteine 115–cysteine 151 and cysteine 133–cysteine 168. N-linked (GlcNAc...) asparagine glycosylation is present at asparagine 170.

The protein belongs to the tumor necrosis factor family. In terms of assembly, homotrimer. Post-translationally, N-glycosylated.

It is found in the cell membrane. Its function is as follows. Expressed at the plasma membrane of B cells, it is the ligand of the CD27 receptor which is specifically expressed at the surface of T cells. The CD70-CD27 signaling pathway mediates antigen-specific T cell activation and expansion which in turn provides immune surveillance of B cells. This chain is CD70 antigen, found in Homo sapiens (Human).